A 274-amino-acid chain; its full sequence is uncharacterized protein (274 aa).

The segment covering 1 to 15 (MEESKTKRKEDRIDL) has biased composition (basic and acidic residues). A disordered region spans residues 1-40 (MEESKTKRKEDRIDLKNTPPQKKSKRDSTNDETARTSLRS). One can recognise a G-patch domain in the interval 41–87 (IMPRGYKMMENMGYKEGETLGSNESALKEPIKVEINTKRRGIRAEKP).

The protein localises to the cytoplasm. It localises to the nucleus. This is an uncharacterized protein from Saccharomyces cerevisiae (strain ATCC 204508 / S288c) (Baker's yeast).